Reading from the N-terminus, the 209-residue chain is Probable transcriptional regulator ycf29 (209 aa).

The Response regulatory domain occupies 4–120; the sequence is NLMLVENDTV…ELVSLIKNLI (117 aa). D53 bears the 4-aspartylphosphate mark. In terms of domain architecture, HTH luxR-type spans 139–204; it reads PLFQLLYLTP…LLVKYSIKNN (66 aa).

Its subcellular location is the plastid. It is found in the chloroplast. This is Probable transcriptional regulator ycf29 (ycf29) from Porphyra purpurea (Red seaweed).